The following is a 364-amino-acid chain: MSHCTIFLYKYFPGKPRYQHCSFLHPLNHKLKSLFLPITGSRFLSNSTFSVSDSAHSHQAKPHVRNAQFDFKAYMLEKITAVNQALDAALPVREPVKIHEAMRYSLLLGGKRICPIVCLAACHLVGGDESTAMPSAAALEMIHAMSLMHDDLPCMDNDDLRRGRPSNHVVFGEGATVLAGYALIARAFEHIATATQGVGPGKILRVIGELAQLIGAEGVVGGQVVDLRCGGEGQMAIGLEQLEYIHLHKTAASVEASAVAGAVLGGASEEEIERLRKYSRSAGLLFQVVDDILDVTKSSEELGKTAGKDLAAGKTTYPKLLGMEKSREMAEKLKREAQEQLLGFDPIKAAPLIALVDFIAYRDK.

The N-terminal 51 residues, 1–51, are a transit peptide targeting the chloroplast; that stretch reads MSHCTIFLYKYFPGKPRYQHCSFLHPLNHKLKSLFLPITGSRFLSNSTFSV. Isopentenyl diphosphate-binding residues include Lys-72, Lys-111, and His-143. Mg(2+)-binding residues include Asp-150 and Asp-156. Arg-161 is a binding site for dimethylallyl diphosphate. Arg-162 contributes to the isopentenyl diphosphate binding site. 6 residues coordinate dimethylallyl diphosphate: Lys-249, Thr-250, Gln-287, Asp-294, Lys-304, and Lys-314.

Belongs to the FPP/GGPP synthase family. As to quaternary structure, monomer. Mg(2+) serves as cofactor. Strongly expressed in glandular trichomes, and, at low levels, in leaves, stems and flowers.

The protein localises to the plastid. It localises to the chloroplast. It catalyses the reaction isopentenyl diphosphate + (2E,6E,10E)-geranylgeranyl diphosphate = (2E,6E,10E,14E)-geranylfarnesyl diphosphate + diphosphate. It carries out the reaction 2 isopentenyl diphosphate + (2E,6E)-farnesyl diphosphate = (2E,6E,10E,14E)-geranylfarnesyl diphosphate + 2 diphosphate. The enzyme catalyses 3 isopentenyl diphosphate + (2E)-geranyl diphosphate = (2E,6E,10E,14E)-geranylfarnesyl diphosphate + 3 diphosphate. The catalysed reaction is 4 isopentenyl diphosphate + dimethylallyl diphosphate = (2E,6E,10E,14E)-geranylfarnesyl diphosphate + 4 diphosphate. Its pathway is secondary metabolite biosynthesis; terpenoid biosynthesis. The protein operates within isoprenoid biosynthesis. Its function is as follows. Involved in the biosynthesis of leucosceptrane sesterterpenoids natural products, which are playing defensive roles toward herbivorus insects (e.g. Spodoptera exigua). Catalyzes the condensation of isopentenyl pyrophosphate (IDP) with the allylic pyrophosphates to yield geranylfarnesyl diphosphate (GFDP), the C(25) prenyl diphosphate precursor to all sesterterpenoids. Geranylgeranyl diphosphate (GGPP) is the preferred substrate, however dimethylallyl diphosphate (DMADP), farnesyl diphosphate (FDP) and geranyl diphosphate (GDP) can also be used as allylic substrate. This is Geranylfarnesyl diphosphate synthase, chloroplastic from Leucosceptrum canum (Hairy white-wand).